A 199-amino-acid chain; its full sequence is NADH-quinone oxidoreductase subunit C (199 aa).

It belongs to the complex I 30 kDa subunit family. As to quaternary structure, NDH-1 is composed of 14 different subunits. Subunits NuoB, C, D, E, F, and G constitute the peripheral sector of the complex.

Its subcellular location is the cell inner membrane. The enzyme catalyses a quinone + NADH + 5 H(+)(in) = a quinol + NAD(+) + 4 H(+)(out). Its function is as follows. NDH-1 shuttles electrons from NADH, via FMN and iron-sulfur (Fe-S) centers, to quinones in the respiratory chain. The immediate electron acceptor for the enzyme in this species is believed to be ubiquinone. Couples the redox reaction to proton translocation (for every two electrons transferred, four hydrogen ions are translocated across the cytoplasmic membrane), and thus conserves the redox energy in a proton gradient. This chain is NADH-quinone oxidoreductase subunit C, found in Leptothrix cholodnii (strain ATCC 51168 / LMG 8142 / SP-6) (Leptothrix discophora (strain SP-6)).